Here is a 494-residue protein sequence, read N- to C-terminus: Sulfate adenylyltransferase subunit 1 (494 aa).

A tr-type G domain is found at 24–240; it reads TRPLRLITCG…LELATVRSAQ (217 aa). Residues 33 to 40 form a G1 region; it reads GSVDDGKS. Residue 33 to 40 coordinates GTP; sequence GSVDDGKS. The G2 stretch occupies residues 91-95; it reads GITID. Positions 112–115 are G3; the sequence is DTPG. GTP-binding positions include 112–116 and 167–170; these read DTPGH and NKID. Residues 167-170 are G4; the sequence is NKID. Residues 204-206 are G5; that stretch reads SAL.

The protein belongs to the TRAFAC class translation factor GTPase superfamily. Classic translation factor GTPase family. CysN/NodQ subfamily. Heterodimer composed of CysD, the smaller subunit, and CysN.

It carries out the reaction sulfate + ATP + H(+) = adenosine 5'-phosphosulfate + diphosphate. It functions in the pathway sulfur metabolism; hydrogen sulfide biosynthesis; sulfite from sulfate: step 1/3. Its function is as follows. With CysD forms the ATP sulfurylase (ATPS) that catalyzes the adenylation of sulfate producing adenosine 5'-phosphosulfate (APS) and diphosphate, the first enzymatic step in sulfur assimilation pathway. APS synthesis involves the formation of a high-energy phosphoric-sulfuric acid anhydride bond driven by GTP hydrolysis by CysN coupled to ATP hydrolysis by CysD. This chain is Sulfate adenylyltransferase subunit 1, found in Rhizobium tropici.